The chain runs to 170 residues: Small ribosomal subunit protein uS13m (170 aa).

Residues 130-170 (LKKKPTNRKERRIFNKIKKLQDKHNKQQQKNKKSKKWKTKK) are disordered. Basic residues-rich tracts occupy residues 132 to 147 (KKPTNRKERRIFNKIK) and 155 to 170 (KQQQKNKKSKKWKTKK).

It belongs to the universal ribosomal protein uS13 family. In terms of assembly, part of the small ribosomal subunit.

The protein resides in the mitochondrion. Functionally, located at the top of the head of the small subunit, it contacts several helices of the small subunit rRNA. This is Small ribosomal subunit protein uS13m (mrps13) from Dictyostelium citrinum (Slime mold).